We begin with the raw amino-acid sequence, 136 residues long: Probable disulfide formation protein (136 aa).

A helical transmembrane segment spans residues Ser-7–Phe-26. Cys-36 and Cys-39 are joined by a disulfide. Transmembrane regions (helical) follow at residues Tyr-41–Glu-60 and Tyr-67–Phe-84. Cys-96 and Cys-101 are joined by a disulfide. The helical transmembrane segment at Ser-109–Thr-131 threads the bilayer.

Belongs to the DsbB family. BdbC subfamily.

The protein resides in the cell inner membrane. Required for disulfide bond formation in some proteins. In Chlamydia pneumoniae (Chlamydophila pneumoniae), this protein is Probable disulfide formation protein.